The following is a 77-amino-acid chain: Sec-independent protein translocase protein TatA (77 aa).

The chain crosses the membrane as a helical span at residues 1–21; it reads MGSFSIWHWLVVGILVLLLFG. Residues 41-77 are disordered; it reads KGMSEDDAPTPAPKQIDAQRAPDLSATPTPTAETENR. A compositionally biased stretch (polar residues) spans 66–77; that stretch reads ATPTPTAETENR.

The protein belongs to the TatA/E family. The Tat system comprises two distinct complexes: a TatABC complex, containing multiple copies of TatA, TatB and TatC subunits, and a separate TatA complex, containing only TatA subunits. Substrates initially bind to the TatABC complex, which probably triggers association of the separate TatA complex to form the active translocon.

The protein resides in the cell inner membrane. In terms of biological role, part of the twin-arginine translocation (Tat) system that transports large folded proteins containing a characteristic twin-arginine motif in their signal peptide across membranes. TatA could form the protein-conducting channel of the Tat system. In Sphingopyxis alaskensis (strain DSM 13593 / LMG 18877 / RB2256) (Sphingomonas alaskensis), this protein is Sec-independent protein translocase protein TatA.